Reading from the N-terminus, the 62-residue chain is Keratin-associated protein 6-2 (62 aa).

The protein belongs to the KRTAP type 6 family. Interacts with hair keratins.

Its function is as follows. In the hair cortex, hair keratin intermediate filaments are embedded in an interfilamentous matrix, consisting of hair keratin-associated proteins (KRTAP), which are essential for the formation of a rigid and resistant hair shaft through their extensive disulfide bond cross-linking with abundant cysteine residues of hair keratins. The matrix proteins include the high-sulfur and high-glycine-tyrosine keratins. The protein is Keratin-associated protein 6-2 (KRTAP6-2) of Homo sapiens (Human).